The chain runs to 432 residues: GRAM domain-containing protein 2B (432 aa).

At methionine 1 the chain carries N-acetylmethionine. Disordered stretches follow at residues 1–61 (MTEL…SPDQ) and 74–106 (DGAS…SSQY). Composition is skewed to basic and acidic residues over residues 9–39 (EDTK…EEKK) and 81–99 (DKND…ERKK). The region spanning 110 to 177 (MHFHKLFLSV…FSVTLIKKTK (68 aa)) is the GRAM domain. Over residues 220–233 (TSVGNSPNPSSAEN) the composition is skewed to polar residues. The disordered stretch occupies residues 220–239 (TSVGNSPNPSSAENSFRADR). Residues serine 225, serine 242, and serine 252 each carry the phosphoserine modification. The disordered stretch occupies residues 262 to 285 (RQDMEGYSSSGSQTPESENSRDFH). Over residues 268–278 (YSSSGSQTPES) the composition is skewed to polar residues.

In Homo sapiens (Human), this protein is GRAM domain-containing protein 2B (GRAMD2B).